We begin with the raw amino-acid sequence, 316 residues long: Neuroguidin (316 aa).

Disordered regions lie at residues 143 to 172 and 280 to 316; these read SEAD…VKKY and SALT…RKRH. A compositionally biased stretch (acidic residues) spans 145-157; sequence ADEGESDSGEDCA. Residues 297-316 show a composition bias toward basic residues; it reads KKSRKGPKKSKKRKGFRKRH.

This sequence belongs to the SAS10 family. In terms of assembly, part of the small subunit (SSU) processome, composed of more than 70 proteins and the RNA chaperone small nucleolar RNA (snoRNA) U3.

It localises to the nucleus. The protein localises to the nucleolus. It is found in the chromosome. Its subcellular location is the centromere. The protein resides in the cytoplasm. It localises to the cell projection. The protein localises to the axon. It is found in the dendrite. Its subcellular location is the filopodium. Its function is as follows. Part of the small subunit (SSU) processome, first precursor of the small eukaryotic ribosomal subunit. During the assembly of the SSU processome in the nucleolus, many ribosome biogenesis factors, an RNA chaperone and ribosomal proteins associate with the nascent pre-rRNA and work in concert to generate RNA folding, modifications, rearrangements and cleavage as well as targeted degradation of pre-ribosomal RNA by the RNA exosome. Its dissociation from the complex determines the transition from state pre-A1 to state pre-A1*. May inhibit mRNA translation. This Xenopus tropicalis (Western clawed frog) protein is Neuroguidin (ngdn).